A 245-amino-acid chain; its full sequence is Pyridoxine 5'-phosphate synthase (245 aa).

Residue asparagine 7 participates in 3-amino-2-oxopropyl phosphate binding. 9–10 (DH) contacts 1-deoxy-D-xylulose 5-phosphate. Arginine 18 contacts 3-amino-2-oxopropyl phosphate. The active-site Proton acceptor is histidine 43. Residues arginine 45 and histidine 50 each contribute to the 1-deoxy-D-xylulose 5-phosphate site. The active-site Proton acceptor is the glutamate 70. Threonine 100 contributes to the 1-deoxy-D-xylulose 5-phosphate binding site. Histidine 190 (proton donor) is an active-site residue. 3-amino-2-oxopropyl phosphate-binding positions include glycine 191 and 212 to 213 (GH).

It belongs to the PNP synthase family. In terms of assembly, homooctamer; tetramer of dimers.

It is found in the cytoplasm. The catalysed reaction is 3-amino-2-oxopropyl phosphate + 1-deoxy-D-xylulose 5-phosphate = pyridoxine 5'-phosphate + phosphate + 2 H2O + H(+). It participates in cofactor biosynthesis; pyridoxine 5'-phosphate biosynthesis; pyridoxine 5'-phosphate from D-erythrose 4-phosphate: step 5/5. In terms of biological role, catalyzes the complicated ring closure reaction between the two acyclic compounds 1-deoxy-D-xylulose-5-phosphate (DXP) and 3-amino-2-oxopropyl phosphate (1-amino-acetone-3-phosphate or AAP) to form pyridoxine 5'-phosphate (PNP) and inorganic phosphate. The sequence is that of Pyridoxine 5'-phosphate synthase from Prochlorococcus marinus (strain MIT 9313).